The following is a 446-amino-acid chain: Mannosyltransferase KTR6 (446 aa).

Topologically, residues 1-8 are cytoplasmic; that stretch reads MHVLLSKK. Residues 9 to 29 form a helical; Signal-anchor for type II membrane protein membrane-spanning segment; that stretch reads IARFLLISFVFVLALMVTINH. Residues 30-114 form a stem region region; it reads PKTKQMSEQY…MVPSYINHRG (85 aa). The Lumenal segment spans residues 30-446; it reads PKTKQMSEQY…DKPEGWDRLP (417 aa). N82 and N98 each carry an N-linked (GlcNAc...) asparagine glycan. The catalytic stretch occupies residues 115-446; it reads SPPKACFVSL…DKPEGWDRLP (332 aa). E334 acts as the Nucleophile in catalysis.

Belongs to the glycosyltransferase 15 family.

The protein localises to the membrane. It participates in protein modification; protein glycosylation. In terms of biological role, glycosyltransferase that transfers an alpha-D-mannosyl residue from GDP-mannose into lipid-linked oligosaccharide, forming an alpha-(1-&gt;2)-D-mannosyl-D-mannose linkage. Required for addition of mannosylphosphate in yeast mannan. Recognizes any oligosaccharides with at least one alpha-1,2-linked mannobiose unit. This Saccharomyces cerevisiae (strain ATCC 204508 / S288c) (Baker's yeast) protein is Mannosyltransferase KTR6 (KTR6).